Reading from the N-terminus, the 295-residue chain is UTP--glucose-1-phosphate uridylyltransferase (295 aa).

It belongs to the UDPGP type 2 family.

It catalyses the reaction alpha-D-glucose 1-phosphate + UTP + H(+) = UDP-alpha-D-glucose + diphosphate. In terms of biological role, may play a role in stationary phase survival. In Haemophilus influenzae (strain ATCC 51907 / DSM 11121 / KW20 / Rd), this protein is UTP--glucose-1-phosphate uridylyltransferase (galU).